A 121-amino-acid polypeptide reads, in one-letter code: NADH-ubiquinone oxidoreductase chain 3 (121 aa).

3 helical membrane-spanning segments follow: residues 11–31, 63–83, and 90–110; these read ILTFFAISFSISTLILALSYF, FYLVAILFLIFDLEISFLFPW, and LSIFGFWSMIVFLIILTLGFI.

This sequence belongs to the complex I subunit 3 family.

The protein resides in the mitochondrion membrane. It catalyses the reaction a ubiquinone + NADH + 5 H(+)(in) = a ubiquinol + NAD(+) + 4 H(+)(out). Functionally, core subunit of the mitochondrial membrane respiratory chain NADH dehydrogenase (Complex I) that is believed to belong to the minimal assembly required for catalysis. Complex I functions in the transfer of electrons from NADH to the respiratory chain. The immediate electron acceptor for the enzyme is believed to be ubiquinone. The polypeptide is NADH-ubiquinone oxidoreductase chain 3 (NAD3) (Porphyra purpurea (Red seaweed)).